Reading from the N-terminus, the 570-residue chain is Periplasmic trehalase (570 aa).

A signal peptide spans 1-34 (MITPALRHSGTLSFAIKLTVASTLLTFASLSAHA). Substrate is bound by residues Arg157, 164 to 165 (WD), Asn201, 210 to 212 (RSQ), 282 to 284 (RPE), and Gly315. Active-site proton donor/acceptor residues include Asp317 and Glu501. A substrate-binding site is contributed by Glu516. The disordered stretch occupies residues 542–570 (KPCDSVPATRPAAPGASQPAPQKQVETTP). Low complexity predominate over residues 552–570 (PAAPGASQPAPQKQVETTP).

This sequence belongs to the glycosyl hydrolase 37 family. In terms of assembly, monomer.

The protein resides in the periplasm. It catalyses the reaction alpha,alpha-trehalose + H2O = alpha-D-glucose + beta-D-glucose. Provides the cells with the ability to utilize trehalose at high osmolarity by splitting it into glucose molecules that can subsequently be taken up by the phosphotransferase-mediated uptake system. The polypeptide is Periplasmic trehalase (Citrobacter koseri (strain ATCC BAA-895 / CDC 4225-83 / SGSC4696)).